A 394-amino-acid chain; its full sequence is Flap endonuclease 1 (394 aa).

The segment at 1–104 (MGIKQLFTII…GELARRYQRK (104 aa)) is N-domain. Mg(2+) is bound at residue Asp-34. Residues Arg-47 and Arg-70 each coordinate DNA. Residues Asp-86, Glu-158, Glu-160, Asp-179, and Asp-181 each contribute to the Mg(2+) site. Residues 122 to 253 (DVEKFSRRTV…STALKLIREH (132 aa)) form an I-domain region. Glu-158 contributes to the DNA binding site. Positions 231 and 233 each coordinate DNA. Asp-233 is a Mg(2+) binding site. The interval 340-348 (QQQRLEGFF) is interaction with PCNA. Positions 358–394 (QKAHKRKLEVKAEEAKKKLKAEKKEKAKAKARPRGTA) are disordered. Residues 374–394 (KKLKAEKKEKAKAKARPRGTA) show a composition bias toward basic residues.

Belongs to the XPG/RAD2 endonuclease family. FEN1 subfamily. In terms of assembly, interacts with PCNA. Three molecules of FEN1 bind to one PCNA trimer with each molecule binding to one PCNA monomer. PCNA stimulates the nuclease activity without altering cleavage specificity. Mg(2+) is required as a cofactor. Post-translationally, phosphorylated. Phosphorylation upon DNA damage induces relocalization to the nuclear plasma.

It is found in the nucleus. It localises to the nucleolus. Its subcellular location is the nucleoplasm. The protein resides in the mitochondrion. In terms of biological role, structure-specific nuclease with 5'-flap endonuclease and 5'-3' exonuclease activities involved in DNA replication and repair. During DNA replication, cleaves the 5'-overhanging flap structure that is generated by displacement synthesis when DNA polymerase encounters the 5'-end of a downstream Okazaki fragment. It enters the flap from the 5'-end and then tracks to cleave the flap base, leaving a nick for ligation. Also involved in the long patch base excision repair (LP-BER) pathway, by cleaving within the apurinic/apyrimidinic (AP) site-terminated flap. Acts as a genome stabilization factor that prevents flaps from equilibrating into structures that lead to duplications and deletions. Also possesses 5'-3' exonuclease activity on nicked or gapped double-stranded DNA, and exhibits RNase H activity. Also involved in replication and repair of rDNA and in repairing mitochondrial DNA. This Pyricularia oryzae (strain 70-15 / ATCC MYA-4617 / FGSC 8958) (Rice blast fungus) protein is Flap endonuclease 1.